A 740-amino-acid chain; its full sequence is NAD(P)H-quinone oxidoreductase subunit 5, chloroplastic (740 aa).

Helical transmembrane passes span 9–29 (WIIP…LLLF), 40–60 (WSFL…YLSI), 89–109 (IDPL…FVLI), 125–145 (FAYM…SNLI), 147–167 (IYFF…FWFT), 185–205 (GDFG…SFEF), 221–241 (VNLL…IAKS), 258–278 (TPIS…FLVA), 283–303 (LFIV…ITIL), 327–347 (LGYM…FHLI), 354–374 (ALLF…VGYS), 396–416 (TAFL…CFWS), 425–445 (LLFS…TAFY), 547–567 (ILFP…IGIP), 606–626 (FSVS…KPFY), and 718–738 (ISSY…FLKI).

This sequence belongs to the complex I subunit 5 family. As to quaternary structure, NDH is composed of at least 16 different subunits, 5 of which are encoded in the nucleus.

The protein localises to the plastid. It localises to the chloroplast thylakoid membrane. The catalysed reaction is a plastoquinone + NADH + (n+1) H(+)(in) = a plastoquinol + NAD(+) + n H(+)(out). The enzyme catalyses a plastoquinone + NADPH + (n+1) H(+)(in) = a plastoquinol + NADP(+) + n H(+)(out). Its function is as follows. NDH shuttles electrons from NAD(P)H:plastoquinone, via FMN and iron-sulfur (Fe-S) centers, to quinones in the photosynthetic chain and possibly in a chloroplast respiratory chain. The immediate electron acceptor for the enzyme in this species is believed to be plastoquinone. Couples the redox reaction to proton translocation, and thus conserves the redox energy in a proton gradient. The sequence is that of NAD(P)H-quinone oxidoreductase subunit 5, chloroplastic (ndhF) from Aethionema grandiflorum (Persian stone-cress).